A 43-amino-acid chain; its full sequence is Protein PsbN (43 aa).

Residues 5–27 (NLVTISISCLLVSLTGYAIYTSF) traverse the membrane as a helical segment.

This sequence belongs to the PsbN family.

It localises to the plastid. Its subcellular location is the chloroplast thylakoid membrane. In terms of biological role, may play a role in photosystem I and II biogenesis. The sequence is that of Protein PsbN from Gnetum gnemon (Spanish joint-fir).